Here is a 159-residue protein sequence, read N- to C-terminus: 2-C-methyl-D-erythritol 2,4-cyclodiphosphate synthase (159 aa).

A divalent metal cation is bound by residues D11 and H13. Residues 11–13 (DVH) and 37–38 (HS) contribute to the 4-CDP-2-C-methyl-D-erythritol 2-phosphate site. Position 45 (H45) interacts with a divalent metal cation. Residues 59-61 (DIG) and 64-68 (FPDSD) contribute to the 4-CDP-2-C-methyl-D-erythritol 2-phosphate site.

It belongs to the IspF family. As to quaternary structure, homotrimer. The cofactor is a divalent metal cation.

It catalyses the reaction 4-CDP-2-C-methyl-D-erythritol 2-phosphate = 2-C-methyl-D-erythritol 2,4-cyclic diphosphate + CMP. It participates in isoprenoid biosynthesis; isopentenyl diphosphate biosynthesis via DXP pathway; isopentenyl diphosphate from 1-deoxy-D-xylulose 5-phosphate: step 4/6. Functionally, involved in the biosynthesis of isopentenyl diphosphate (IPP) and dimethylallyl diphosphate (DMAPP), two major building blocks of isoprenoid compounds. Catalyzes the conversion of 4-diphosphocytidyl-2-C-methyl-D-erythritol 2-phosphate (CDP-ME2P) to 2-C-methyl-D-erythritol 2,4-cyclodiphosphate (ME-CPP) with a corresponding release of cytidine 5-monophosphate (CMP). In Solibacter usitatus (strain Ellin6076), this protein is 2-C-methyl-D-erythritol 2,4-cyclodiphosphate synthase.